The chain runs to 93 residues: Acylphosphatase (93 aa).

The region spanning threonine 5 to tyrosine 93 is the Acylphosphatase-like domain. Residues arginine 20 and asparagine 38 contribute to the active site.

This sequence belongs to the acylphosphatase family.

The catalysed reaction is an acyl phosphate + H2O = a carboxylate + phosphate + H(+). In Listeria monocytogenes serotype 4b (strain F2365), this protein is Acylphosphatase (acyP).